The following is a 131-amino-acid chain: Ponticulin-like protein M (131 aa).

The first 19 residues, 1–19 (MKFLSTLILLLSVLALVRG), serve as a signal peptide directing secretion. The GPI-like-anchor amidated serine moiety is linked to residue Ser106. Positions 107–131 (NSASSPLTTAVLFVVAFAAAIALLL) are cleaved as a propeptide — removed in mature form.

Belongs to the ponticulin family. The GPI-like-anchor contains a phosphoceramide group, rather than a phosphatidyl group.

It is found in the cell membrane. Its function is as follows. Binds F-actin and nucleates actin assembly. This chain is Ponticulin-like protein M (ponM), found in Dictyostelium discoideum (Social amoeba).